The chain runs to 478 residues: Membrane-bound lytic murein transglycosylase F (478 aa).

Residues 1 to 22 (MTRFLFAIILGFLLTACQQVTV) form the signal peptide. Positions 23 to 257 (EETEYVPHKL…HLNEKYFGHV (235 aa)) are non-LT domain. An LT domain region spans residues 258–478 (KRFDYIDTRA…PGTLSPDKPK (221 aa)). Residue Glu302 is part of the active site. Residues 446–478 (SKQQNSDEEEPSDLASEDGPAPVPGTLSPDKPK) form a disordered region. The span at 451–461 (SDEEEPSDLAS) shows a compositional bias: acidic residues.

This sequence in the N-terminal section; belongs to the bacterial solute-binding protein 3 family. The protein in the C-terminal section; belongs to the transglycosylase Slt family.

The protein localises to the cell outer membrane. It carries out the reaction Exolytic cleavage of the (1-&gt;4)-beta-glycosidic linkage between N-acetylmuramic acid (MurNAc) and N-acetylglucosamine (GlcNAc) residues in peptidoglycan, from either the reducing or the non-reducing ends of the peptidoglycan chains, with concomitant formation of a 1,6-anhydrobond in the MurNAc residue.. In terms of biological role, murein-degrading enzyme that degrades murein glycan strands and insoluble, high-molecular weight murein sacculi, with the concomitant formation of a 1,6-anhydromuramoyl product. Lytic transglycosylases (LTs) play an integral role in the metabolism of the peptidoglycan (PG) sacculus. Their lytic action creates space within the PG sacculus to allow for its expansion as well as for the insertion of various structures such as secretion systems and flagella. In Shewanella sp. (strain MR-4), this protein is Membrane-bound lytic murein transglycosylase F.